We begin with the raw amino-acid sequence, 504 residues long: ATP synthase subunit alpha (504 aa).

169-176 (GDRQTGKT) contributes to the ATP binding site.

Belongs to the ATPase alpha/beta chains family. F-type ATPases have 2 components, CF(1) - the catalytic core - and CF(0) - the membrane proton channel. CF(1) has five subunits: alpha(3), beta(3), gamma(1), delta(1), epsilon(1). CF(0) has three main subunits: a(1), b(2) and c(9-12). The alpha and beta chains form an alternating ring which encloses part of the gamma chain. CF(1) is attached to CF(0) by a central stalk formed by the gamma and epsilon chains, while a peripheral stalk is formed by the delta and b chains.

Its subcellular location is the cell membrane. The enzyme catalyses ATP + H2O + 4 H(+)(in) = ADP + phosphate + 5 H(+)(out). Produces ATP from ADP in the presence of a proton gradient across the membrane. The alpha chain is a regulatory subunit. The polypeptide is ATP synthase subunit alpha (Clostridium kluyveri (strain NBRC 12016)).